A 118-amino-acid polypeptide reads, in one-letter code: V-type proton ATPase subunit G 2 (118 aa).

The disordered stretch occupies residues 23 to 90 (ADARKRKARR…VQGMQSSQQR (68 aa)). The segment covering 35-55 (QAKEEAQMEVEQYRREREQEF) has biased composition (basic and acidic residues). 2 stretches are compositionally biased toward polar residues: residues 56–69 (QSKQ…QGNL) and 78–89 (RRQVQGMQSSQQ).

The protein belongs to the V-ATPase G subunit family. V-ATPase is a heteromultimeric enzyme made up of two complexes: the ATP-hydrolytic V1 complex and the proton translocation V0 complex. The V1 complex consists of three catalytic AB heterodimers that form a heterohexamer, three peripheral stalks each consisting of EG heterodimers, one central rotor including subunits D and F, and the regulatory subunits C and H. The proton translocation complex V0 consists of the proton transport subunit a, a ring of proteolipid subunits c9c'', rotary subunit d, subunits e and f, and the accessory subunits ATP6AP1/Ac45 and ATP6AP2/PRR.

The protein resides in the melanosome. It localises to the cytoplasmic vesicle. It is found in the clathrin-coated vesicle membrane. Functionally, subunit of the V1 complex of vacuolar(H+)-ATPase (V-ATPase), a multisubunit enzyme composed of a peripheral complex (V1) that hydrolyzes ATP and a membrane integral complex (V0) that translocates protons. V-ATPase is responsible for acidifying and maintaining the pH of intracellular compartments and in some cell types, is targeted to the plasma membrane, where it is responsible for acidifying the extracellular environment. In Macaca mulatta (Rhesus macaque), this protein is V-type proton ATPase subunit G 2 (ATP6V1G2).